The primary structure comprises 427 residues: Histidine--tRNA ligase (427 aa).

Belongs to the class-II aminoacyl-tRNA synthetase family. In terms of assembly, homodimer.

It is found in the cytoplasm. It carries out the reaction tRNA(His) + L-histidine + ATP = L-histidyl-tRNA(His) + AMP + diphosphate + H(+). This chain is Histidine--tRNA ligase, found in Streptococcus suis (strain 98HAH33).